Here is a 388-residue protein sequence, read N- to C-terminus: Serpin B11 (388 aa).

The segment at glutamate 338 to phenylalanine 362 is RCL.

This sequence belongs to the serpin family. Ov-serpin subfamily. Expressed in eye, lung, lymphocytes, thymus, stomach, uterus, heart, brain, liver, skeletal muscle, and in day 7, 15, and 17 embryos.

It is found in the cytoplasm. Inhibitor of serine proteases. Has moderate inhibitory activity for trypsin-like peptidases, but also some activity with cysteine peptidases, cathepsin L, K, and V, and the serine peptidase, tryptase gamma. In Mus musculus (Mouse), this protein is Serpin B11 (Serpinb11).